The primary structure comprises 78 residues: Nucleocapsid VP1 (78 aa).

As to quaternary structure, homodimer.

Its subcellular location is the virion. Functionally, completely wraps the viral circular dsDNA genome to form a nucleoprotein filament. These interactions between the viral genome and the nucleocapsid proteins probably maintain the DNA in A-form. This certainly protects the viral DNA under conditions such as the extreme desiccation of its host. The sequence is that of Nucleocapsid VP1 from Sulfolobus (SPV1).